The sequence spans 57 residues: Thiocillin GE37468 (57 aa).

Residues 1 to 42 (MGNNEEYFIDVNDLSIDVFDVVEQGGAVTALTADHGMPEVGA) constitute a propeptide, removed in mature form. The segment at residues 43 to 44 (ST) is a cross-link (5-methyloxazole-4-carboxylic acid (Ser-Thr)). Residues 43–52 (STNCFCYICC) constitute a cross-link (pyridine-2,5-dicarboxylic acid (Ser-Cys) (with S-53)). The pyridine-2,5-dicarboxylic acid (Ser-Ser) (with C-52) cross-link spans 43–53 (STNCFCYICCS). A cross-link (thiazole-4-carboxylic acid (Asn-Cys)) is located at residues 45–46 (NC). Residues 47–48 (FC) constitute a cross-link (thiazoline-4-carboxylic acid (Phe-Cys)). Position 50 is a 5-hydroxy-3-methylproline (Ile) (Ile50). Positions 50-51 (IC) form a cross-link, thiazole-4-carboxylic acid (Ile-Cys). A cross-link (thiazole-4-carboxylic acid (Cys-Cys)) is located at residues 51 to 52 (CC). The segment at residues 53-54 (SC) is a cross-link (thiazole-4-carboxylic acid (Ser-Cys)). 2,3-didehydroalanine (Ser) is present on residues Ser55 and Ser56. Residue Asn57 is a propeptide, removed in mature form.

In terms of processing, maturation of thiazole and oxazole containing antibiotics involves the enzymatic condensation of a Cys, Ser or Thr with the alpha-carbonyl of the preceding amino acid to form a thioether or ether bond, then dehydration to form a double bond with the alpha-amino nitrogen. Thiazoline or oxazoline ring are dehydrogenated to form thiazole or oxazole rings. Post-translationally, maturation of pyridinyl containing antibiotics involves the cross-linking of a Ser and a Cys-Ser pair usually separated by 7 or 8 residues along the peptide chain. The Ser residues are dehydrated to didehydroalanines, then bonded between their beta carbons. The alpha carbonyl of the Cys condenses with alpha carbon of the first Ser to form a pyridinyl ring. The ring may be multiply dehydrogenated to form a pyridine ring with loss of the amino nitrogen of the first Ser.

It localises to the secreted. Its function is as follows. Has bacteriocidal activity against both aerobic and anaerobic Gram-positive bacteria. Inhibits growth of B.subtilis (MIC=0.047 ug/ml) and methicillin-resistant S.aureus (MRSA) (MIC=0.047 ug/ml). Has poor activity against Gram-negative bacteria, with the exception of B.fragilis. Inhibits bacterial protein biosynthesis by acting on elongation factor Tu (EF-Tu). Full antibiotic activity depends on the presence of the modified residue Ile-50. The polypeptide is Thiocillin GE37468 (getA) (Streptomyces sp).